Consider the following 166-residue polypeptide: Phosphopantetheine adenylyltransferase (166 aa).

Residue Thr-10 participates in substrate binding. ATP is bound by residues 10-11 and His-18; that span reads TF. Residues Lys-42, Leu-74, and Arg-88 each contribute to the substrate site. ATP-binding positions include 89-91, Glu-99, and 124-130; these read GLR and NSFISSS.

Belongs to the bacterial CoaD family. In terms of assembly, homohexamer. Mg(2+) serves as cofactor.

It localises to the cytoplasm. The enzyme catalyses (R)-4'-phosphopantetheine + ATP + H(+) = 3'-dephospho-CoA + diphosphate. The protein operates within cofactor biosynthesis; coenzyme A biosynthesis; CoA from (R)-pantothenate: step 4/5. Reversibly transfers an adenylyl group from ATP to 4'-phosphopantetheine, yielding dephospho-CoA (dPCoA) and pyrophosphate. This Idiomarina loihiensis (strain ATCC BAA-735 / DSM 15497 / L2-TR) protein is Phosphopantetheine adenylyltransferase.